A 142-amino-acid polypeptide reads, in one-letter code: Protein E6 (142 aa).

2 zinc fingers span residues 27–63 and 100–136; these read CIFC…CTKC and CQHC…CRNC.

This sequence belongs to the papillomaviridae E6 protein family. In terms of assembly, forms homodimers. Interacts with ubiquitin-protein ligase UBE3A/E6-AP; this interaction stimulates UBE3A ubiquitin activity. Interacts with host BAK1.

The protein resides in the host cytoplasm. Its subcellular location is the host nucleus. Its function is as follows. Plays a major role in the induction and maintenance of cellular transformation. E6 associates with host UBE3A/E6-AP ubiquitin-protein ligase and modulates its activity. Protects host keratinocytes from apoptosis by mediating the degradation of host BAK1. May also inhibit host immune response. This chain is Protein E6, found in Homo sapiens (Human).